The sequence spans 276 residues: Formamidopyrimidine-DNA glycosylase (276 aa).

Pro2 functions as the Schiff-base intermediate with DNA in the catalytic mechanism. Glu3 serves as the catalytic Proton donor. Lys60 (proton donor; for beta-elimination activity) is an active-site residue. His93, Arg112, and Arg155 together coordinate DNA. Residues 240–274 (LVYGRKDEACTKCGAEIIRFVVGGRGTHICPDCQK) form an FPG-type zinc finger. Arg264 acts as the Proton donor; for delta-elimination activity in catalysis.

The protein belongs to the FPG family. As to quaternary structure, monomer. Zn(2+) serves as cofactor.

The enzyme catalyses Hydrolysis of DNA containing ring-opened 7-methylguanine residues, releasing 2,6-diamino-4-hydroxy-5-(N-methyl)formamidopyrimidine.. It catalyses the reaction 2'-deoxyribonucleotide-(2'-deoxyribose 5'-phosphate)-2'-deoxyribonucleotide-DNA = a 3'-end 2'-deoxyribonucleotide-(2,3-dehydro-2,3-deoxyribose 5'-phosphate)-DNA + a 5'-end 5'-phospho-2'-deoxyribonucleoside-DNA + H(+). In terms of biological role, involved in base excision repair of DNA damaged by oxidation or by mutagenic agents. Acts as a DNA glycosylase that recognizes and removes damaged bases. Has a preference for oxidized purines, such as 7,8-dihydro-8-oxoguanine (8-oxoG). Has AP (apurinic/apyrimidinic) lyase activity and introduces nicks in the DNA strand. Cleaves the DNA backbone by beta-delta elimination to generate a single-strand break at the site of the removed base with both 3'- and 5'-phosphates. This chain is Formamidopyrimidine-DNA glycosylase, found in Brevibacillus brevis (strain 47 / JCM 6285 / NBRC 100599).